The chain runs to 342 residues: GTPase Obg (342 aa).

The region spanning 1–159 is the Obg domain; that stretch reads MKFLDLCKVY…RTIWLRLKLI (159 aa). An OBG-type G domain is found at 160–327; that stretch reads ADAGLLGLPN…VLRALWAEID (168 aa). GTP is bound by residues 166–173, 191–195, 212–215, 279–282, and 308–310; these read GLPNAGKS, FTTLV, DIPG, NKID, and SGV. Mg(2+)-binding residues include Ser173 and Thr193.

The protein belongs to the TRAFAC class OBG-HflX-like GTPase superfamily. OBG GTPase family. Monomer. Mg(2+) is required as a cofactor.

It localises to the cytoplasm. Functionally, an essential GTPase which binds GTP, GDP and possibly (p)ppGpp with moderate affinity, with high nucleotide exchange rates and a fairly low GTP hydrolysis rate. Plays a role in control of the cell cycle, stress response, ribosome biogenesis and in those bacteria that undergo differentiation, in morphogenesis control. This chain is GTPase Obg, found in Cereibacter sphaeroides (strain ATCC 17025 / ATH 2.4.3) (Rhodobacter sphaeroides).